We begin with the raw amino-acid sequence, 319 residues long: 7,8-didemethyl-8-hydroxy-5-deazariboflavin synthase (319 aa).

The 232-residue stretch at 5–236 folds into the Radical SAM core domain; that stretch reads VTYSPAYTIV…SNITLQIPPN (232 aa). Cysteine 19, cysteine 23, and cysteine 26 together coordinate [4Fe-4S] cluster.

The protein belongs to the radical SAM superfamily. CofG family. In terms of assembly, consists of two subunits, CofG and CofH. It depends on [4Fe-4S] cluster as a cofactor.

It catalyses the reaction 5-amino-5-(4-hydroxybenzyl)-6-(D-ribitylimino)-5,6-dihydrouracil + S-adenosyl-L-methionine = 7,8-didemethyl-8-hydroxy-5-deazariboflavin + 5'-deoxyadenosine + L-methionine + NH4(+) + H(+). It functions in the pathway cofactor biosynthesis; coenzyme F0 biosynthesis. In terms of biological role, catalyzes the radical-mediated synthesis of 7,8-didemethyl-8-hydroxy-5-deazariboflavin from 5-amino-5-(4-hydroxybenzyl)-6-(D-ribitylimino)-5,6-dihydrouracil. This chain is 7,8-didemethyl-8-hydroxy-5-deazariboflavin synthase, found in Trichodesmium erythraeum (strain IMS101).